Here is a 1043-residue protein sequence, read N- to C-terminus: Chitin synthase 2 (1043 aa).

The segment covering methionine 1–glutamine 10 has biased composition (polar residues). Disordered stretches follow at residues methionine 1–proline 133 and glutamate 215–glycine 234. Over residues serine 11 to proline 21 the composition is skewed to basic and acidic residues. Low complexity predominate over residues serine 43–proline 58. Polar residues-rich tracts occupy residues glycine 59 to threonine 73 and valine 81 to serine 93. Helical transmembrane passes span phenylalanine 663–isoleucine 683, isoleucine 703–methionine 723, methionine 738–methionine 758, tyrosine 780–leucine 800, tyrosine 907–phenylalanine 927, and serine 931–phenylalanine 951.

Belongs to the chitin synthase family. Class II subfamily.

It is found in the cell membrane. The catalysed reaction is [(1-&gt;4)-N-acetyl-beta-D-glucosaminyl](n) + UDP-N-acetyl-alpha-D-glucosamine = [(1-&gt;4)-N-acetyl-beta-D-glucosaminyl](n+1) + UDP + H(+). Functionally, polymerizes chitin, a structural polymer of the cell wall and septum, by transferring the sugar moiety of UDP-GlcNAc to the non-reducing end of the growing chitin polymer. This is Chitin synthase 2 (CHS2) from Paracoccidioides brasiliensis.